A 135-amino-acid chain; its full sequence is Aspartate 1-decarboxylase (135 aa).

Catalysis depends on Ser25, which acts as the Schiff-base intermediate with substrate; via pyruvic acid. Position 25 is a pyruvic acid (Ser) (Ser25). Thr57 serves as a coordination point for substrate. The active-site Proton donor is Tyr58. 73-75 (GAA) is a substrate binding site.

This sequence belongs to the PanD family. In terms of assembly, heterooctamer of four alpha and four beta subunits. Pyruvate serves as cofactor. Is synthesized initially as an inactive proenzyme, which is activated by self-cleavage at a specific serine bond to produce a beta-subunit with a hydroxyl group at its C-terminus and an alpha-subunit with a pyruvoyl group at its N-terminus.

It is found in the cytoplasm. It catalyses the reaction L-aspartate + H(+) = beta-alanine + CO2. It functions in the pathway cofactor biosynthesis; (R)-pantothenate biosynthesis; beta-alanine from L-aspartate: step 1/1. Its function is as follows. Catalyzes the pyruvoyl-dependent decarboxylation of aspartate to produce beta-alanine. This chain is Aspartate 1-decarboxylase, found in Mycobacterium sp. (strain JLS).